Consider the following 106-residue polypeptide: uncharacterized protein (106 aa).

Helical transmembrane passes span 43–63 (CSTIIACNLGSWFFKISLAIV) and 86–106 (IPELALIIICTFIYFLYFSLF).

Its subcellular location is the membrane. This is an uncharacterized protein from Saccharomyces cerevisiae (strain ATCC 204508 / S288c) (Baker's yeast).